The sequence spans 139 residues: MILKPIGVVKSPFKTQNDAPRQGRFSDAVSEIAIFDEYADGLHKIENLRHIIVLYWMDKASRDKLRVVPPGETEERGVFTTRSPSRPNPIGLCVVEILEVERNRLKVRWLDALDGSPVIDIKKYSPEIDCVNQLEGQQP.

Residues Leu-3–Gln-133 form the TsaA-like domain. S-adenosyl-L-methionine-binding positions include Gln-16, Pro-20–Gln-22, Asp-58–Lys-59, Arg-82, Leu-92, and Leu-113–Ser-116.

Belongs to the tRNA methyltransferase O family. In terms of assembly, homodimer.

This chain is S-adenosyl-L-methionine-binding protein AF_0241, found in Archaeoglobus fulgidus (strain ATCC 49558 / DSM 4304 / JCM 9628 / NBRC 100126 / VC-16).